Consider the following 267-residue polypeptide: MAPVPELTSEMMAYYSDENDLFFEADGPEKMKGSLQNLSHSFLGDEGIQLQISHQPDNKSLRHAVSVIVAMEKLKKISFACSQPLQDEDLKSLFCCIFEEEPIICDTWDDGFVCDAAIQSQDYTFRDISQKSLVLSGSYELRALHLNGQNMNQQVVFRMSFVHGEENSKKIPVVLCIKKNNLYLSCVMKDGKPTLQLEMLDPKVYPKKKMEKRFVFNKTEIKGNVEFESSQFPNWYISTSQAEEMPVFLGNTKGGQDITDFIMESAS.

A propeptide spanning residues 1 to 115 (MAPVPELTSE…DTWDDGFVCD (115 aa)) is cleaved from the precursor.

This sequence belongs to the IL-1 family. In terms of assembly, monomer. In its precursor form, weakly interacts with full-length MEFV; the mature cytokine does not interact at all. Interacts with integrins ITGAV:ITGBV and ITGA5:ITGB1; integrin-binding is required for IL1B signaling. Interacts with cargo receptor TMED10; the interaction is direct and is required for the secretion of IL1B mature form. Interacts with HSP90AB1; the interaction facilitates cargo translocation into the ERGIC. Interacts with HSP90B1; the interaction facilitates cargo translocation into the ERGIC.

Its subcellular location is the cytoplasm. The protein resides in the cytosol. It is found in the secreted. It localises to the lysosome. The protein localises to the extracellular exosome. Potent pro-inflammatory cytokine. Initially discovered as the major endogenous pyrogen, induces prostaglandin synthesis, neutrophil influx and activation, T-cell activation and cytokine production, B-cell activation and antibody production, and fibroblast proliferation and collagen production. Promotes Th17 differentiation of T-cells. Synergizes with IL12/interleukin-12 to induce IFNG synthesis from T-helper 1 (Th1) cells. Plays a role in angiogenesis by inducing VEGF production synergistically with TNF and IL6. Involved in transduction of inflammation downstream of pyroptosis: its mature form is specifically released in the extracellular milieu by passing through the gasdermin-D (GSDMD) pore. The chain is Interleukin-1 beta (IL1B) from Felis catus (Cat).